We begin with the raw amino-acid sequence, 232 residues long: Ribonuclease HII (232 aa).

One can recognise an RNase H type-2 domain in the interval 26-218 (RILCGVDEAG…VRRALEGMSA (193 aa)). Residues Asp-32, Glu-33, and Asp-127 each coordinate a divalent metal cation.

This sequence belongs to the RNase HII family. It depends on Mn(2+) as a cofactor. Mg(2+) is required as a cofactor.

Its subcellular location is the cytoplasm. The enzyme catalyses Endonucleolytic cleavage to 5'-phosphomonoester.. Functionally, endonuclease that specifically degrades the RNA of RNA-DNA hybrids. The sequence is that of Ribonuclease HII from Ralstonia pickettii (strain 12J).